The sequence spans 249 residues: NH(3)-dependent NAD(+) synthetase (249 aa).

29–36 (GVSGGVDS) is a binding site for ATP. Residue Asp35 participates in Mg(2+) binding. Arg116 provides a ligand contact to deamido-NAD(+). Residue Thr136 coordinates ATP. Glu141 provides a ligand contact to Mg(2+). 2 residues coordinate deamido-NAD(+): Lys149 and Asp156. ATP-binding residues include Lys165 and Ser187. Deamido-NAD(+) is bound at residue 233 to 234 (HK).

The protein belongs to the NAD synthetase family. Homodimer.

The catalysed reaction is deamido-NAD(+) + NH4(+) + ATP = AMP + diphosphate + NAD(+) + H(+). It participates in cofactor biosynthesis; NAD(+) biosynthesis; NAD(+) from deamido-NAD(+) (ammonia route): step 1/1. Functionally, catalyzes the ATP-dependent amidation of deamido-NAD to form NAD. Uses ammonia as a nitrogen source. This chain is NH(3)-dependent NAD(+) synthetase, found in Syntrophomonas wolfei subsp. wolfei (strain DSM 2245B / Goettingen).